Reading from the N-terminus, the 424-residue chain is MVFVACGLNHKTAPIHVREKVALQPAMQDSLLSSLLDLPEVNEAAILSTCNRTEIYCDTNTPEVLGNWLAHEHQLSEELLSQFLYIHQGKEGIKHTLRVASGLDSMMIGEPQILGQMKQAYQHACRLGTVKTQLRPVFEYIFRASKRIRTRSGIGANPVSIAYAAVQLIGQLFKNYHSLSVFLIGSGETASLVAKYLHQHGVHRFLIASRTLENAQKLAETFDGKTLSIGDIPQYLPLADVVISATACPLPFINKSLVEHALEQRNHAPMFLLDLAVPRDIEGNVNELEQVHLYNVDDLQSMIEKGMDERRNAALQAEQLIESELDNYIRWHRSLRAKDVICDYRNQMHTLAQQELQRALKKISAGQNQQDVLNEFSMRLVNKLTHNPTIGLRQMAWDNREDLLDLARYLFDTTANQSLYEEIS.

Substrate is bound by residues 49 to 52 (TCNR), S105, 110 to 112 (EPQ), and Q116. C50 (nucleophile) is an active-site residue. Position 185–190 (185–190 (GSGETA)) interacts with NADP(+).

This sequence belongs to the glutamyl-tRNA reductase family. Homodimer.

It catalyses the reaction (S)-4-amino-5-oxopentanoate + tRNA(Glu) + NADP(+) = L-glutamyl-tRNA(Glu) + NADPH + H(+). Its pathway is porphyrin-containing compound metabolism; protoporphyrin-IX biosynthesis; 5-aminolevulinate from L-glutamyl-tRNA(Glu): step 1/2. In terms of biological role, catalyzes the NADPH-dependent reduction of glutamyl-tRNA(Glu) to glutamate 1-semialdehyde (GSA). The protein is Glutamyl-tRNA reductase of Legionella pneumophila (strain Lens).